The chain runs to 151 residues: Transcription factor ATOH7 (151 aa).

The region spanning 39 to 91 (KRRLAANARERRRMQGLNTAFDRLRKVVPQWGQDKKLSKYETLQMALSYIMAL) is the bHLH domain.

The protein resides in the nucleus. It localises to the perikaryon. Its subcellular location is the cell projection. It is found in the axon. Functionally, transcription factor that binds to DNA at the consensus sequence 5'-CAG[GC]TG-3'. Positively regulates the determination of retinal ganglion cell fate and formation of the optic nerve and retino-hypothalamic tract. Required for retinal circadian rhythm photoentrainment. Plays a role in brainstem auditory signaling and binaural processing. During retinal neurogenesis, activates its own transcription, as well as the transcription of CHRNB3 and BRN3. In Gallus gallus (Chicken), this protein is Transcription factor ATOH7.